Consider the following 633-residue polypeptide: Terminal nucleotidyltransferase 4B (633 aa).

Positions 1–115 are disordered; the sequence is MFRSGERPLG…GGGRADGGGG (115 aa). Residues 25-34 show a composition bias toward polar residues; it reads ETTNNNNNHH. Composition is skewed to low complexity over residues 36–52 and 60–70; these read PAAWARRASAGPSASPV and RPAAALPASES. A compositionally biased stretch (polar residues) spans 87-98; sequence ASTYGLNYSLLQ. Gly residues predominate over residues 103-115; that stretch reads RAAGGGRADGGGG. Aspartate 191 and aspartate 193 together coordinate Mg(2+). Residues glycine 254, lysine 279, serine 297, tyrosine 298, asparagine 382, and arginine 386 each coordinate ATP. The region spanning 322–382 is the PAP-associated domain; that stretch reads NYGVLLIEFF…YIEDPLQPGN (61 aa). Positions 484–633 are disordered; it reads LGKCRSNASE…RDAPLSELCR (150 aa). Low complexity predominate over residues 492–519; that stretch reads SEPLSKHSSNSSSGPVSSSSATQSSSSD. Lysine 531 participates in a covalent cross-link: Glycyl lysine isopeptide (Lys-Gly) (interchain with G-Cter in SUMO2). Residues 542 to 552 are compositionally biased toward polar residues; it reads RVGSQDVSLEV. Serine 545 is modified (phosphoserine). Residues lysine 558, lysine 573, and lysine 587 each participate in a glycyl lysine isopeptide (Lys-Gly) (interchain with G-Cter in SUMO2) cross-link. Over residues 559-614 the composition is skewed to polar residues; it reads MQSTQTTNTPNNANKSQHGSARLFRSSSKGFQGTAQTSHGALMTSKQHQGKSNTQY. The Basic, involved in binding of the RNA primer motif lies at 618–624; the sequence is KKRRHKR.

Belongs to the DNA polymerase type-B-like family. Component of a nucleolar TRAMP-like complex, an ATP-dependent exosome regulatory complex consisting of a helicase (MTREX), an oligadenylate polymerase (TENT4B or TENT4A), and a substrate specific RNA-binding factor (ZCCHC7 or ZCCHC8). Several TRAMP-like complexes exist with specific compositions and are associated with nuclear, or nucleolar RNA exosomes. Mg(2+) is required as a cofactor. Mn(2+) serves as cofactor.

It localises to the nucleus. The protein resides in the nucleolus. It is found in the cytoplasm. The catalysed reaction is RNA(n) + ATP = RNA(n)-3'-adenine ribonucleotide + diphosphate. Its function is as follows. Terminal nucleotidyltransferase that catalyzes preferentially the transfer of ATP and GTP on RNA 3' poly(A) tail creating a heterogeneous 3' poly(A) tail leading to mRNAs stabilization by protecting mRNAs from active deadenylation. Also functions as a catalytic subunit of a TRAMP-like complex which has a poly(A) RNA polymerase activity and is involved in a post-transcriptional quality control mechanism. Polyadenylation with short oligo(A) tails is required for the degradative activity of the exosome on several of its nuclear RNA substrates. Doesn't need a cofactor for polyadenylation activity (in vitro). Plays a role in replication-dependent histone mRNA degradation, probably through terminal uridylation of mature histone mRNAs. May play a role in sister chromatid cohesion. This is Terminal nucleotidyltransferase 4B from Mus musculus (Mouse).